The sequence spans 187 residues: uncharacterized protein (187 aa).

The signal sequence occupies residues 1–28; it reads MRLHRTNNSRRCTILLILALKIFDFVDT. Asn58, Asn70, Asn156, and Asn168 each carry an N-linked (GlcNAc...) asparagine glycan.

It is found in the secreted. This is an uncharacterized protein from Caenorhabditis elegans.